We begin with the raw amino-acid sequence, 189 residues long: Peptidyl-tRNA hydrolase (189 aa).

A tRNA-binding site is contributed by Tyr-14. The active-site Proton acceptor is the His-19. Residues Phe-64, Asn-66, and Asn-112 each coordinate tRNA.

The protein belongs to the PTH family. Monomer.

Its subcellular location is the cytoplasm. It catalyses the reaction an N-acyl-L-alpha-aminoacyl-tRNA + H2O = an N-acyl-L-amino acid + a tRNA + H(+). Functionally, hydrolyzes ribosome-free peptidyl-tRNAs (with 1 or more amino acids incorporated), which drop off the ribosome during protein synthesis, or as a result of ribosome stalling. Its function is as follows. Catalyzes the release of premature peptidyl moieties from peptidyl-tRNA molecules trapped in stalled 50S ribosomal subunits, and thus maintains levels of free tRNAs and 50S ribosomes. In Zymomonas mobilis subsp. mobilis (strain ATCC 31821 / ZM4 / CP4), this protein is Peptidyl-tRNA hydrolase.